The sequence spans 173 residues: Bifunctional protein PyrR (173 aa).

Positions 93–105 match the PRPP-binding motif; that stretch reads VILIDDVLYTGRT.

The protein belongs to the purine/pyrimidine phosphoribosyltransferase family. PyrR subfamily. As to quaternary structure, homodimer and homohexamer; in equilibrium.

The catalysed reaction is UMP + diphosphate = 5-phospho-alpha-D-ribose 1-diphosphate + uracil. Functionally, regulates transcriptional attenuation of the pyrimidine nucleotide (pyr) operon by binding in a uridine-dependent manner to specific sites on pyr mRNA. This disrupts an antiterminator hairpin in the RNA and favors formation of a downstream transcription terminator, leading to a reduced expression of downstream genes. Also displays a weak uracil phosphoribosyltransferase activity which is not physiologically significant. The chain is Bifunctional protein PyrR from Streptococcus pyogenes serotype M49 (strain NZ131).